A 355-amino-acid chain; its full sequence is Glucose-1-phosphate thymidylyltransferase (355 aa).

2 residues coordinate Mg(2+): Asp107 and Asp220.

It belongs to the glucose-1-phosphate thymidylyltransferase family. The cofactor is Mg(2+).

It catalyses the reaction dTTP + alpha-D-glucose 1-phosphate + H(+) = dTDP-alpha-D-glucose + diphosphate. The protein operates within antibiotic biosynthesis; streptomycin biosynthesis. Functionally, involved in the biosynthesis of the streptose moiety of streptomycin. Catalyzes the formation of dTDP-glucose, from dTTP and glucose 1-phosphate, as well as its pyrophosphorolysis. In Streptomyces griseus, this protein is Glucose-1-phosphate thymidylyltransferase (strD).